A 475-amino-acid chain; its full sequence is Sulfate adenylyltransferase subunit 1 (475 aa).

The 215-residue stretch at 25–239 (KSLLRFLTCG…EVLETVEIQR (215 aa)) folds into the tr-type G domain. The interval 34–41 (GSVDDGKS) is G1. 34–41 (GSVDDGKS) contributes to the GTP binding site. A G2 region spans residues 92 to 96 (GITID). The segment at 113 to 116 (DTPG) is G3. Residues 113 to 117 (DTPGH) and 168 to 171 (NKMD) contribute to the GTP site. Positions 168–171 (NKMD) are G4. The G5 stretch occupies residues 206-208 (SAL).

This sequence belongs to the TRAFAC class translation factor GTPase superfamily. Classic translation factor GTPase family. CysN/NodQ subfamily. Heterodimer composed of CysD, the smaller subunit, and CysN.

It carries out the reaction sulfate + ATP + H(+) = adenosine 5'-phosphosulfate + diphosphate. The protein operates within sulfur metabolism; hydrogen sulfide biosynthesis; sulfite from sulfate: step 1/3. Functionally, with CysD forms the ATP sulfurylase (ATPS) that catalyzes the adenylation of sulfate producing adenosine 5'-phosphosulfate (APS) and diphosphate, the first enzymatic step in sulfur assimilation pathway. APS synthesis involves the formation of a high-energy phosphoric-sulfuric acid anhydride bond driven by GTP hydrolysis by CysN coupled to ATP hydrolysis by CysD. The protein is Sulfate adenylyltransferase subunit 1 of Escherichia coli (strain UTI89 / UPEC).